A 221-amino-acid chain; its full sequence is Chalcone--flavanone isomerase 2 (221 aa).

Substrate-binding residues include T50, N115, and S192.

Belongs to the chalcone isomerase family.

It catalyses the reaction a chalcone = a flavanone.. It participates in secondary metabolite biosynthesis; flavonoid biosynthesis. Functionally, catalyzes the intramolecular cyclization of bicyclic chalcones into tricyclic (S)-flavanones. Responsible for the isomerization of 4,2',4',6'-tetrahydroxychalcone (also termed chalcone) into naringenin. This is Chalcone--flavanone isomerase 2 (CHI2) from Lotus japonicus (Lotus corniculatus var. japonicus).